Consider the following 345-residue polypeptide: Ribosomal RNA small subunit methyltransferase H (345 aa).

S-adenosyl-L-methionine-binding positions include 47 to 49 (GGY), D65, F92, D113, and Q120. Residues 296–345 (EPGPDEVAGNPRARSAKLRAAERTNAPAHPGGDLMGLLPAPPPQRHGRRR) are disordered.

The protein belongs to the methyltransferase superfamily. RsmH family.

The protein resides in the cytoplasm. The enzyme catalyses cytidine(1402) in 16S rRNA + S-adenosyl-L-methionine = N(4)-methylcytidine(1402) in 16S rRNA + S-adenosyl-L-homocysteine + H(+). Its function is as follows. Specifically methylates the N4 position of cytidine in position 1402 (C1402) of 16S rRNA. The sequence is that of Ribosomal RNA small subunit methyltransferase H from Xanthobacter autotrophicus (strain ATCC BAA-1158 / Py2).